Consider the following 448-residue polypeptide: Serine--tRNA ligase (448 aa).

255–257 (TSE) serves as a coordination point for L-serine. 286–288 (RSE) contributes to the ATP binding site. E309 is a binding site for L-serine. Position 373-376 (373-376 (EISS)) interacts with ATP. S408 contacts L-serine.

It belongs to the class-II aminoacyl-tRNA synthetase family. Type-1 seryl-tRNA synthetase subfamily. Homodimer. The tRNA molecule binds across the dimer.

The protein localises to the cytoplasm. The enzyme catalyses tRNA(Ser) + L-serine + ATP = L-seryl-tRNA(Ser) + AMP + diphosphate + H(+). The catalysed reaction is tRNA(Sec) + L-serine + ATP = L-seryl-tRNA(Sec) + AMP + diphosphate + H(+). It functions in the pathway aminoacyl-tRNA biosynthesis; selenocysteinyl-tRNA(Sec) biosynthesis; L-seryl-tRNA(Sec) from L-serine and tRNA(Sec): step 1/1. Functionally, catalyzes the attachment of serine to tRNA(Ser). Is also able to aminoacylate tRNA(Sec) with serine, to form the misacylated tRNA L-seryl-tRNA(Sec), which will be further converted into selenocysteinyl-tRNA(Sec). The protein is Serine--tRNA ligase of Bordetella petrii (strain ATCC BAA-461 / DSM 12804 / CCUG 43448).